Reading from the N-terminus, the 369-residue chain is F-box protein At3g08750 (369 aa).

The F-box domain occupies 6–53; that stretch reads CLLLPSLPFELIEEILYKIPAESLIRFKSTCKKWYNLITEKRFMYNHL.

The protein is F-box protein At3g08750 of Arabidopsis thaliana (Mouse-ear cress).